The primary structure comprises 353 residues: MKIAYVVSSKKKCGPNIVILNIVKELANKHEMEIFFLDESDDDVFECVNVKSTQIKKASDLKEHLKRFDIIHSSGIRPDALVVLCKVIYRVKCKIITTIHNYVFQDLYYSYGLVKSLIGGLLWCSIWLFFDKLVILSKNADNYYWFLPSAKKNIIYNGIDDNDCLQNKKCNYRKEFNIPDDGILAGSCANLTKRKGIDLVIQTLTKEHKIYYIVAGNGIEKHNLINLVKARKLHERVYFIDFLDEPESFMSQLDVFLMPSRSEGFGLTVLESTKLGIPVITSNIPIFMELFDQMCLTFDIKNPSTLIDVITYAKKNRLHLSQKFHAIFQDRFTSSKMATKYENVYNNLFREVL.

A helical membrane pass occupies residues 116 to 136; it reads SLIGGLLWCSIWLFFDKLVIL. Residues Asn190 and Glu271 each coordinate UDP. Residues 263–271 carry the E(x7)E motif; that stretch reads EGFGLTVLE.

This sequence belongs to the glycosyltransferase group 1 family. Glycosyltransferase 4 subfamily.

It localises to the membrane. It participates in bacterial outer membrane biogenesis; LPS O-antigen biosynthesis. Its activity is regulated as follows. Activated by 5mM MnCl(2) and MgCl(2). No significant effect on activity by 5 mM ethylenediaminetetraacetic acid (EDTA), 0.125-0.5% Triton X-100 or dithiothreitol (DTT). Inhibited by 5 mM Zn-acetate. Its function is as follows. Involved in the assembly of the O-repeating unit during O-antigen biosynthesis. Glucosyltransferase accountable for the alpha-D-Glc-1,4-beta-D-Gal linkage within the O-antigen. Transfers alpha-1,4-Glc to the Gal moiety of a specific Gal-beta1-3GalNAc-alpha-OPO3-PO3-phenoxyundecyl (Gal-beta1-3GalNAc-PP-PhU) synthetic natural acceptor substrate analog. Requires both Gal-beta1-3GalNAc-alpha and the diphosphate moiety in the acceptor. Not active with GalNAc-PP-PhU, GlcNAc-PP-PhU, Gal-beta1-3GalNAc-alpha-O-benzyl, D-Rha-alpha1-3GlcNAc-alpha-PP-PhU or D-Man-alpha1-3Man-alpha-5-benzamidopentyl (BAP), nor with glycopeptides TTTVTP (Gal-beta1-3GalNAc-alpha-)TPTG or TT (Gal-beta1-3GalNAc-alpha-)TVTPTPTG as acceptor substrates. Has a broad nucleotide sugar donor substrate specificity with ADP-Glc, TDP-Glc and UDP-Glc as superior donors. Gal, GlcNAc, and GalNAc residues are transferred from UDP-sugars, but with low activity. UDP-Xyl, UDP-GlcA, GDP-Fuc or GDP-K-Rha do not act as donors. The protein is O-antigen biosynthesis glycosyltransferase WclY of Escherichia coli.